A 611-amino-acid polypeptide reads, in one-letter code: MPILRSATSTQGRNMAGARALWRATGMKENDFGKPIIAVVNSFTQFVPGHVHLRDMGKLVAEQIEAAGGVAKEFNTIAVDDGIAMGHGGMLYSLPSRDLIADSVEYMVNAHCADAMVCISNCDKITPGMLMAAMRLNIPAVFVSGGPMEAGKTKLSDQLIKLDLVDAMMKSADKTVCDDDVDAIEKSACPTCGSCSGMFTANSMNCLTEALGLSLPGNGSMLATHADRKELFLTAGRQIVELCKRYYEQDDASVLPRSIATKAAFENAMSLDIAMGGSTNTVLHLLAAAQEAEVDFTMADIDRLSRKVPCLSKVAPNTNKYHMEDVHRAGGIMAILGELERADLLHSDTRTVLGMTIGEQIAKYDITLTKDEAVHKFFRAGPAGIRTTKAFSQDCRWDTVDDDRQNGCIRSKEFAYSQDGGLAMLTGNIALDGCIVKTAGVDESILKFTGDAIVFESQEEAVEGILGGKVRAGHVVIIRYEGPKGGPGMQEMLYPTTYLKSIGLGKECALLTDGRFSGGTSGLSIGHCSPEAASGGTIGLVRDGDKIAIDIPNRSIQLLVSDEELAVRRAEQDTKGWKPANRQREVSMALKMFGHFATSADKGAVRDKTKL.

Position 81 (Asp-81) interacts with Mg(2+). Cys-122 serves as a coordination point for [2Fe-2S] cluster. The Mg(2+) site is built by Asp-123 and Lys-124. At Lys-124 the chain carries N6-carboxylysine. Cys-195 is a [2Fe-2S] cluster binding site. Residue Glu-491 participates in Mg(2+) binding. Ser-517 functions as the Proton acceptor in the catalytic mechanism.

Belongs to the IlvD/Edd family. As to quaternary structure, homodimer. Requires [2Fe-2S] cluster as cofactor. Mg(2+) serves as cofactor.

It catalyses the reaction (2R)-2,3-dihydroxy-3-methylbutanoate = 3-methyl-2-oxobutanoate + H2O. The catalysed reaction is (2R,3R)-2,3-dihydroxy-3-methylpentanoate = (S)-3-methyl-2-oxopentanoate + H2O. Its pathway is amino-acid biosynthesis; L-isoleucine biosynthesis; L-isoleucine from 2-oxobutanoate: step 3/4. It functions in the pathway amino-acid biosynthesis; L-valine biosynthesis; L-valine from pyruvate: step 3/4. Functions in the biosynthesis of branched-chain amino acids. Catalyzes the dehydration of (2R,3R)-2,3-dihydroxy-3-methylpentanoate (2,3-dihydroxy-3-methylvalerate) into 2-oxo-3-methylpentanoate (2-oxo-3-methylvalerate) and of (2R)-2,3-dihydroxy-3-methylbutanoate (2,3-dihydroxyisovalerate) into 2-oxo-3-methylbutanoate (2-oxoisovalerate), the penultimate precursor to L-isoleucine and L-valine, respectively. The sequence is that of Dihydroxy-acid dehydratase from Actinobacillus pleuropneumoniae serotype 5b (strain L20).